Reading from the N-terminus, the 92-residue chain is Signal recognition particle 19 kDa protein (92 aa).

Belongs to the SRP19 family. Part of the signal recognition particle protein translocation system, which is composed of SRP and FtsY. Archaeal SRP consists of a 7S RNA molecule of 300 nucleotides and two protein subunits: SRP54 and SRP19.

Its subcellular location is the cytoplasm. Its function is as follows. Involved in targeting and insertion of nascent membrane proteins into the cytoplasmic membrane. Binds directly to 7S RNA and mediates binding of the 54 kDa subunit of the SRP. In Methanosphaera stadtmanae (strain ATCC 43021 / DSM 3091 / JCM 11832 / MCB-3), this protein is Signal recognition particle 19 kDa protein.